Reading from the N-terminus, the 99-residue chain is PE-PGRS family protein PE25 (99 aa).

The region spanning 1–92 (MSFVITNPEA…GADKYATAEA (92 aa)) is the PE domain. Position 2 is an N-acetylserine (Ser2).

The protein belongs to the mycobacterial PE family. In terms of assembly, forms a heterodimer with PPE41. The dimer forms a 1:1:1 heterotrimeric complex with EspG5. Interacts with PPE51.

It is found in the secreted. Functionally, the PE25/PPE41 dimer induces both a strong humoral and cellular immune response. PE25 protein alone induces low response. The dimer induces necrosis, but not apoptosis, in mouse macrophage cells. It also induces activation and maturation of mouse dendritic cells and drives Th2-biased immune responses. This is PE-PGRS family protein PE25 from Mycobacterium tuberculosis (strain ATCC 25618 / H37Rv).